The chain runs to 360 residues: Flavin-dependent trigonelline monooxygenase, oxygenase component (360 aa).

Belongs to the bacterial luciferase oxidoreductase family. As to quaternary structure, homodimer. The trigonelline monooxygenase is composed of a reductase component TgnA and an oxygenase component TgnB.

The catalysed reaction is N-methylnicotinate + FMNH2 + O2 = (Z)-2-((N-methylformamido)methylene)-5-hydroxybutanolactone + FMN + H(+). It catalyses the reaction N-methylnicotinate + FADH2 + O2 = (Z)-2-((N-methylformamido)methylene)-5-hydroxybutanolactone + FAD + H(+). Involved in the degradation of the pyridine ring of trigonelline (TG; N-methylnicotinate) into succinate and methylamine as carbon and nitrogen sources, respectively. Catalyzes the insertion of two oxygens, followed by a ring cleavage of trigonelline to yield (Z)-2-((N-methylformamido)methylene)-5-hydroxybutyrolactone (MFMB). It is able to use reduced FMN or FAD. The polypeptide is Flavin-dependent trigonelline monooxygenase, oxygenase component (Acinetobacter baylyi (strain ATCC 33305 / BD413 / ADP1)).